Reading from the N-terminus, the 569-residue chain is MATPALISETEAWKDLKAHLEGIKRTHLRELMGDTERCQSMMVEFDNIFLDYSRQQASPDTINKLYKLAEAAHLKQKIDRMYNGDHINSTENRSVLHVALRAPRNSAICSDGKNVVPDVWNVLDKIKDFSERVRNGSWVGATGKELKDVIAVGIGGSFLGPLFVHTALQTDPEASKNARGRELRFLANVDPIDAARNISGLNPETTLVVVVSKTFTTAETMLNARTLREWISSALGVAAVAKHMVAVSTNLPLVEKFGIDPNNAFAFWDWVGGRYSVCSAVGVLPLSLQYGFAVVEKFLQGAHNIDQHFSSAPFEKNIPVLLGLLSVWNVSFLGYPARAILPYSQALEKLAPHIQQVSMESNGKGVSIDGLPLPFESGEIDFGEPGTNGQHSFYQLIHQGRVIPCDFIGVVKSQQPVYLKGEVVNNHDELMSNFFAQPDALAYGKTPEELKKENVSEHLIPHKTFTGNRPCLSILLPTLDAYRIGQLLAIYEHRVAVQGFVWGINSFDQWGVELGKSLATQVRKQLHASRVKGEPVEEGFNFSTKTLLTRYLQATTDVPADPSTLLPNI.

The active-site Proton donor is Glu-360. Catalysis depends on residues His-391 and Lys-516.

It belongs to the GPI family. As to quaternary structure, homodimer.

Its subcellular location is the cytoplasm. The catalysed reaction is alpha-D-glucose 6-phosphate = beta-D-fructose 6-phosphate. It participates in carbohydrate degradation; glycolysis; D-glyceraldehyde 3-phosphate and glycerone phosphate from D-glucose: step 2/4. The polypeptide is Glucose-6-phosphate isomerase, cytosolic 2A (PGIC2-A) (Clarkia lewisii (Farewell-to-spring)).